Here is a 156-residue protein sequence, read N- to C-terminus: Small ribosomal subunit protein uS7 (156 aa).

It belongs to the universal ribosomal protein uS7 family. Part of the 30S ribosomal subunit. Contacts proteins S9 and S11.

In terms of biological role, one of the primary rRNA binding proteins, it binds directly to 16S rRNA where it nucleates assembly of the head domain of the 30S subunit. Is located at the subunit interface close to the decoding center, probably blocks exit of the E-site tRNA. This Acidobacterium capsulatum (strain ATCC 51196 / DSM 11244 / BCRC 80197 / JCM 7670 / NBRC 15755 / NCIMB 13165 / 161) protein is Small ribosomal subunit protein uS7.